The following is a 514-amino-acid chain: 2,3-bisphosphoglycerate-independent phosphoglycerate mutase (514 aa).

Residues Asp14 and Ser64 each contribute to the Mn(2+) site. The active-site Phosphoserine intermediate is the Ser64. Residues His125, 155–156, Arg187, Arg193, 263–266, and Lys336 contribute to the substrate site; these read RD and RADR. Mn(2+)-binding residues include Asp403, His407, Asp444, His445, and His463.

This sequence belongs to the BPG-independent phosphoglycerate mutase family. Monomer. It depends on Mn(2+) as a cofactor.

It carries out the reaction (2R)-2-phosphoglycerate = (2R)-3-phosphoglycerate. Its pathway is carbohydrate degradation; glycolysis; pyruvate from D-glyceraldehyde 3-phosphate: step 3/5. Catalyzes the interconversion of 2-phosphoglycerate and 3-phosphoglycerate. In Shewanella sp. (strain MR-4), this protein is 2,3-bisphosphoglycerate-independent phosphoglycerate mutase.